The sequence spans 395 residues: Zinc-regulated GTPase metalloprotein activator 1F (395 aa).

Residues 1–22 form a disordered region; sequence MLPAVGSVDEEEDPAEEDCPEL. A compositionally biased stretch (acidic residues) spans 8-20; the sequence is VDEEEDPAEEDCP. The psi-PxLVp motif motif lies at 17–24; that stretch reads EDCPELVP. Position 49-56 (49-56) interacts with GTP; that stretch reads GYLGAGKT. Zn(2+)-binding residues include cysteine 107, cysteine 109, and cysteine 110. Residues 107-110 carry the CXCC motif motif; that stretch reads CLCC. GTP is bound by residues 110–114 and 203–206; these read CSVKD and NKTD. Positions 274–377 constitute a CobW C-terminal domain; sequence IVTITFDVPG…ILKQLFIATV (104 aa).

The protein belongs to the SIMIBI class G3E GTPase family. ZNG1 subfamily.

It localises to the nucleus. It carries out the reaction GTP + H2O = GDP + phosphate + H(+). Its function is as follows. Zinc chaperone that directly transfers zinc cofactor to target metalloproteins, thereby activating them. Catalyzes zinc insertion into the active site of methionine aminopeptidase METAP1, which function to cleave the initiator methionine from polypeptides during or after protein translation. Mechanistically, the N-terminal psi-PxLVp motif binds to the C6H2-type zinc finger of inactive form of METAP1. After formation of the docked complex, zinc is transferred from the CXCC motif in the GTPase domain of ZNG1F to the zinc binding site in the peptidase domain of METAP1 in a process requiring GTP hydrolysis. GTP/GDP exchange is required for release of active METAP1. The polypeptide is Zinc-regulated GTPase metalloprotein activator 1F (Homo sapiens (Human)).